The following is a 465-amino-acid chain: MRYFALTDLTKPTAKFTTDAMELRQISNAYLNQAQAYLQKGLKQLKKDYKNAILYTPKTEYKRFLKWKQTFLQDLNQTQKRFFIVRAQHFSYVLLFNLLDEQVEAVIATFNNFLDEHRLEAQSKQFDLDTAVNELHDYFDQLQKNTAYSEDLPTHLTQKTEQLINARNTQLTNLLNKIATTKPPLNKQQRLLASFRNYHEHLFLKNEVKKVTWLNEPRAKKESVTPDEEHIIELKNVYKYITNGVTTNAVLKGIDLKLKAHDFIVILGPSGSGKTTLLNIISGMDRPSSGSVVVNGQEMICMNDRQLTNFRRNYVGYIFQQYGLLPNLTVRENVEVGANLQRNPDKRINIDELLEAVGMKHLQKKLPNELSGGQQQRVSIARAFAKNPLLIFGDEPTGALDLEMTQIVLKQFLAIKQRYKTTMVIVTHNNLIAQLADLVIYVADGKIQALQANPNPKQVEDINWI.

One can recognise an ABC transporter domain in the interval 232 to 465; sequence IELKNVYKYI…PKQVEDINWI (234 aa). Residue 268–275 participates in ATP binding; it reads GPSGSGKT.

This sequence belongs to the ABC transporter superfamily.

This Mycoplasma pneumoniae (strain ATCC 29342 / M129 / Subtype 1) (Mycoplasmoides pneumoniae) protein is Putative ABC transporter ATP-binding protein MG065 homolog.